Here is a 184-residue protein sequence, read N- to C-terminus: Endoribonuclease YbeY (184 aa).

Composition is skewed to acidic residues over residues 1–11 and 19–29; these read MTVEVGADENP and DGAGDESDDED. The segment at 1–38 is disordered; sequence MTVEVGADENPDFAHDETDGAGDESDDEDAQGRDPELD. Histidine 146, histidine 150, and histidine 156 together coordinate Zn(2+).

Belongs to the endoribonuclease YbeY family. Zn(2+) serves as cofactor.

The protein resides in the cytoplasm. In terms of biological role, single strand-specific metallo-endoribonuclease involved in late-stage 70S ribosome quality control and in maturation of the 3' terminus of the 16S rRNA. The chain is Endoribonuclease YbeY from Burkholderia pseudomallei (strain K96243).